The following is a 787-amino-acid chain: Endonuclease MutS2 (787 aa).

ATP is bound at residue 329–336; that stretch reads GPNTGGKT. The 76-residue stretch at 712-787 folds into the Smr domain; the sequence is INLLGCTVDE…DAGVTIVDFK (76 aa).

This sequence belongs to the DNA mismatch repair MutS family. MutS2 subfamily. Homodimer. Binds to stalled ribosomes, contacting rRNA.

Endonuclease that is involved in the suppression of homologous recombination and thus may have a key role in the control of bacterial genetic diversity. Functionally, acts as a ribosome collision sensor, splitting the ribosome into its 2 subunits. Detects stalled/collided 70S ribosomes which it binds and splits by an ATP-hydrolysis driven conformational change. Acts upstream of the ribosome quality control system (RQC), a ribosome-associated complex that mediates the extraction of incompletely synthesized nascent chains from stalled ribosomes and their subsequent degradation. Probably generates substrates for RQC. In Lachnospira eligens (strain ATCC 27750 / DSM 3376 / VPI C15-48 / C15-B4) (Eubacterium eligens), this protein is Endonuclease MutS2.